A 359-amino-acid polypeptide reads, in one-letter code: UPF0496 protein At3g57100 (359 aa).

Positions histidine 179–alanine 208 form a coiled coil. The chain crosses the membrane as a helical span at residues leucine 214–isoleucine 234.

It belongs to the UPF0496 family.

The protein resides in the membrane. The sequence is that of UPF0496 protein At3g57100 from Arabidopsis thaliana (Mouse-ear cress).